A 302-amino-acid chain; its full sequence is Sulfate adenylyltransferase subunit 2 (302 aa).

This sequence belongs to the PAPS reductase family. CysD subfamily. Heterodimer composed of CysD, the smaller subunit, and CysN.

The enzyme catalyses sulfate + ATP + H(+) = adenosine 5'-phosphosulfate + diphosphate. Its pathway is sulfur metabolism; hydrogen sulfide biosynthesis; sulfite from sulfate: step 1/3. Its function is as follows. With CysN forms the ATP sulfurylase (ATPS) that catalyzes the adenylation of sulfate producing adenosine 5'-phosphosulfate (APS) and diphosphate, the first enzymatic step in sulfur assimilation pathway. APS synthesis involves the formation of a high-energy phosphoric-sulfuric acid anhydride bond driven by GTP hydrolysis by CysN coupled to ATP hydrolysis by CysD. The sequence is that of Sulfate adenylyltransferase subunit 2 from Yersinia pestis bv. Antiqua (strain Nepal516).